The chain runs to 2223 residues: Protein CHROMATIN REMODELING 4 (2223 aa).

Positions phenylalanine 39 to lysine 69 are disordered. Residues leucine 55–lysine 69 show a composition bias toward basic and acidic residues. The PHD-type zinc finger occupies tyrosine 75 to asparagine 122. Composition is skewed to basic and acidic residues over residues glutamate 173–glycine 187, serine 207–glycine 223, glutamate 248–lysine 285, and glutamate 294–lysine 305. Disordered regions lie at residues glutamate 173–aspartate 235, glutamate 248–aspartate 381, and alanine 441–glycine 474. The segment covering threonine 306–leucine 315 has biased composition (basic residues). A compositionally biased stretch (basic and acidic residues) spans glutamate 353–alanine 368. Residues threonine 372 to aspartate 381 show a composition bias toward polar residues. Over residues alanine 441–aspartate 466 the composition is skewed to basic and acidic residues. Chromo domains follow at residues glutamate 531–lysine 587 and lysine 601–serine 663. Residues arginine 701 to serine 878 enclose the Helicase ATP-binding domain. Aspartate 714–threonine 721 is an ATP binding site. The DEAH box signature appears at aspartate 829 to histidine 832. A Nuclear localization signal motif is present at residues leucine 902–histidine 909. The 160-residue stretch at leucine 1008 to leucine 1167 folds into the Helicase C-terminal domain. Disordered stretches follow at residues glutamate 1268 to valine 1300, glutamate 1341 to lysine 1380, arginine 1394 to proline 1463, serine 1483 to proline 1511, leucine 1760 to phenylalanine 1779, and isoleucine 2006 to aspartate 2223. Residues glutamate 1363–lysine 1380 show a composition bias toward basic and acidic residues. Residues arginine 1375–leucine 1402 adopt a coiled-coil conformation. Over residues proline 1403–alanine 1414 the composition is skewed to polar residues. Residues phenylalanine 2009–proline 2019 are compositionally biased toward pro residues. The span at serine 2025–histidine 2035 shows a compositional bias: basic residues. 3 stretches are compositionally biased toward polar residues: residues glutamine 2039–glutamine 2061, glycine 2075–leucine 2096, and threonine 2128–glutamine 2148. The span at aspartate 2157 to glutamate 2171 shows a compositional bias: basic and acidic residues. The stretch at isoleucine 2189–valine 2215 forms a coiled coil. Acidic residues predominate over residues alanine 2198–glutamate 2210.

Belongs to the SNF2/RAD54 helicase family.

The protein localises to the nucleus. In terms of biological role, chromatin-remodeling protein that binds DNA through histones and regulates gene transcription. May specifically recognize and bind trimethylated 'Lys-27' (H3K27me3) and non-methylated 'Lys-4' of histone H3. Probable chromatin remodeling factor. The chain is Protein CHROMATIN REMODELING 4 from Arabidopsis thaliana (Mouse-ear cress).